The following is a 101-amino-acid chain: Protein Tat (101 aa).

The segment at 1–20 (MEPVDPNLEPWKHPGSQPTT) is disordered. The segment at 1-24 (MEPVDPNLEPWKHPGSQPTTACSN) is interaction with human CREBBP. The interval 1-48 (MEPVDPNLEPWKHPGSQPTTACSNCYCKVCCWHCQLCFLKKGLGISYG) is transactivation. 3 residues coordinate Zn(2+): Cys-22, Cys-25, and Cys-27. Residues 22–37 (CSNCYCKVCCWHCQLC) are cysteine-rich. Lys-28 carries the post-translational modification N6-acetyllysine; by host PCAF. The Zn(2+) site is built by Cys-30, His-33, Cys-34, and Cys-37. The tract at residues 38–48 (FLKKGLGISYG) is core. Positions 48-101 (GKKKRKPRRGPPQGSKDHQTLIPKQPLPQSQRVSAGQEESKKKVESKAKTDRFA) are disordered. A Nuclear localization signal, RNA-binding (TAR), and protein transduction motif is present at residues 49–57 (KKKRKPRRG). The interaction with the host capping enzyme RNGTT stretch occupies residues 49–86 (KKKRKPRRGPPQGSKDHQTLIPKQPLPQSQRVSAGQEE). Lys-50 and Lys-51 each carry N6-acetyllysine; by host EP300 and GCN5L2. Asymmetric dimethylarginine; by host PRMT6 is present on Arg-52. Residue Lys-71 forms a Glycyl lysine isopeptide (Lys-Gly) (interchain with G-Cter in ubiquitin) linkage. The span at 85 to 101 (EESKKKVESKAKTDRFA) shows a compositional bias: basic and acidic residues.

This sequence belongs to the lentiviruses Tat family. As to quaternary structure, interacts with host CCNT1. Associates with the P-TEFb complex composed at least of Tat, P-TEFb (CDK9 and CCNT1), TAR RNA, RNA Pol II. Recruits the HATs CREBBP, TAF1/TFIID, EP300, PCAF and GCN5L2. Interacts with host KAT5/Tip60; this interaction targets the latter to degradation. Interacts with the host deacetylase SIRT1. Interacts with host capping enzyme RNGTT; this interaction stimulates RNGTT. Binds to host KDR, and to the host integrins ITGAV/ITGB3 and ITGA5/ITGB1. Interacts with host KPNB1/importin beta-1 without previous binding to KPNA1/importin alpha-1. Interacts with EIF2AK2. Interacts with host nucleosome assembly protein NAP1L1; this interaction may be required for the transport of Tat within the nucleus, since the two proteins interact at the nuclear rim. Interacts with host C1QBP/SF2P32; this interaction involves lysine-acetylated Tat. Interacts with the host chemokine receptors CCR2, CCR3 and CXCR4. Interacts with host DPP4/CD26; this interaction may trigger an anti-proliferative effect. Interacts with host LDLR. Interacts with the host extracellular matrix metalloproteinase MMP1. Interacts with host PRMT6; this interaction mediates Tat's methylation. Interacts with, and is ubiquitinated by MDM2/Hdm2. Interacts with host PSMC3 and HTATIP2. Interacts with STAB1; this interaction may overcome SATB1-mediated repression of IL2 and IL2RA (interleukin) in T cells by binding to the same domain than HDAC1. Interacts (when acetylated) with human CDK13, thereby increasing HIV-1 mRNA splicing and promoting the production of the doubly spliced HIV-1 protein Nef. Interacts with host TBP; this interaction modulates the activity of transcriptional pre-initiation complex. Interacts with host RELA. Interacts with host PLSCR1; this interaction negatively regulates Tat transactivation activity by altering its subcellular distribution. Asymmetrical arginine methylation by host PRMT6 seems to diminish the transactivation capacity of Tat and affects the interaction with host CCNT1. In terms of processing, acetylation by EP300, CREBBP, GCN5L2/GCN5 and PCAF regulates the transactivation activity of Tat. EP300-mediated acetylation of Lys-50 promotes dissociation of Tat from the TAR RNA through the competitive binding to PCAF's bromodomain. In addition, the non-acetylated Tat's N-terminus can also interact with PCAF. PCAF-mediated acetylation of Lys-28 enhances Tat's binding to CCNT1. Lys-50 is deacetylated by SIRT1. Post-translationally, polyubiquitination by host MDM2 does not target Tat to degradation, but activates its transactivation function and fosters interaction with CCNT1 and TAR RNA. Phosphorylated by EIF2AK2 on serine and threonine residues adjacent to the basic region important for TAR RNA binding and function. Phosphorylation of Tat by EIF2AK2 is dependent on the prior activation of EIF2AK2 by dsRNA.

The protein localises to the host nucleus. It localises to the host nucleolus. It is found in the host cytoplasm. The protein resides in the secreted. Functionally, transcriptional activator that increases RNA Pol II processivity, thereby increasing the level of full-length viral transcripts. Recognizes a hairpin structure at the 5'-LTR of the nascent viral mRNAs referred to as the transactivation responsive RNA element (TAR) and recruits the cyclin T1-CDK9 complex (P-TEFb complex) that will in turn hyperphosphorylate the RNA polymerase II to allow efficient elongation. The CDK9 component of P-TEFb and other Tat-activated kinases hyperphosphorylate the C-terminus of RNA Pol II that becomes stabilized and much more processive. Other factors such as HTATSF1/Tat-SF1, SUPT5H/SPT5, and HTATIP2 are also important for Tat's function. Besides its effect on RNA Pol II processivity, Tat induces chromatin remodeling of proviral genes by recruiting the histone acetyltransferases (HATs) CREBBP, EP300 and PCAF to the chromatin. This also contributes to the increase in proviral transcription rate, especially when the provirus integrates in transcriptionally silent region of the host genome. To ensure maximal activation of the LTR, Tat mediates nuclear translocation of NF-kappa-B by interacting with host RELA. Through its interaction with host TBP, Tat may also modulate transcription initiation. Tat can reactivate a latently infected cell by penetrating in it and transactivating its LTR promoter. In the cytoplasm, Tat is thought to act as a translational activator of HIV-1 mRNAs. Its function is as follows. Extracellular circulating Tat can be endocytosed by surrounding uninfected cells via the binding to several surface receptors such as CD26, CXCR4, heparan sulfate proteoglycans (HSPG) or LDLR. Neurons are rarely infected, but they internalize Tat via their LDLR. Through its interaction with nuclear HATs, Tat is potentially able to control the acetylation-dependent cellular gene expression. Modulates the expression of many cellular genes involved in cell survival, proliferation or in coding for cytokines or cytokine receptors. Tat plays a role in T-cell and neurons apoptosis. Tat induced neurotoxicity and apoptosis probably contribute to neuroAIDS. Circulating Tat also acts as a chemokine-like and/or growth factor-like molecule that binds to specific receptors on the surface of the cells, affecting many cellular pathways. In the vascular system, Tat binds to ITGAV/ITGB3 and ITGA5/ITGB1 integrins dimers at the surface of endothelial cells and competes with bFGF for heparin-binding sites, leading to an excess of soluble bFGF. This is Protein Tat from Human immunodeficiency virus type 1 group M subtype A (isolate U455) (HIV-1).